The sequence spans 381 residues: Glucose-1-phosphate adenylyltransferase (381 aa).

Alpha-D-glucose 1-phosphate contacts are provided by residues Tyr100, Gly165, 180 to 181 (EK), and Ser191.

This sequence belongs to the bacterial/plant glucose-1-phosphate adenylyltransferase family. As to quaternary structure, homotetramer.

It catalyses the reaction alpha-D-glucose 1-phosphate + ATP + H(+) = ADP-alpha-D-glucose + diphosphate. It functions in the pathway glycan biosynthesis; glycogen biosynthesis. Functionally, involved in the biosynthesis of ADP-glucose, a building block required for the elongation reactions to produce glycogen. Catalyzes the reaction between ATP and alpha-D-glucose 1-phosphate (G1P) to produce pyrophosphate and ADP-Glc. In Mycoplasma mobile (strain ATCC 43663 / 163K / NCTC 11711) (Mesomycoplasma mobile), this protein is Glucose-1-phosphate adenylyltransferase.